We begin with the raw amino-acid sequence, 171 residues long: uncharacterized protein (171 aa).

Residues 1-20 (MRRVLFSCFCGLLWSSSGWA) form the signal peptide. Cysteines 40 and 80 form a disulfide.

Belongs to the fimbrial protein family.

It is found in the fimbrium. Its function is as follows. Part of the sfmACDHF fimbrial operon. Could contribute to adhesion to various surfaces in specific environmental niches. Increases adhesion to eukaryotic T24 bladder epithelial cells in the absence of fim genes. This is an uncharacterized protein from Escherichia coli (strain K12).